The primary structure comprises 358 residues: tRNA-specific 2-thiouridylase MnmA (358 aa).

Residues 6-13 (ALSGGVDS) and M32 each bind ATP. C103 functions as the Nucleophile in the catalytic mechanism. A disulfide bridge connects residues C103 and C201. G127 contributes to the ATP binding site. Residues 151–153 (KDQ) are interaction with tRNA. The active-site Cysteine persulfide intermediate is C201.

It belongs to the MnmA/TRMU family.

The protein localises to the cytoplasm. The catalysed reaction is S-sulfanyl-L-cysteinyl-[protein] + uridine(34) in tRNA + AH2 + ATP = 2-thiouridine(34) in tRNA + L-cysteinyl-[protein] + A + AMP + diphosphate + H(+). Catalyzes the 2-thiolation of uridine at the wobble position (U34) of tRNA, leading to the formation of s(2)U34. This Thermotoga maritima (strain ATCC 43589 / DSM 3109 / JCM 10099 / NBRC 100826 / MSB8) protein is tRNA-specific 2-thiouridylase MnmA.